A 23-amino-acid polypeptide reads, in one-letter code: Dahlein-4.1 (23 aa).

As to expression, expressed by the skin dorsal glands.

The protein localises to the secreted. Has no antimicrobial activity. The chain is Dahlein-4.1 from Ranoidea dahlii (Dahl's aquatic frog).